A 3993-amino-acid chain; its full sequence is Intermembrane lipid transfer protein VPS13B (3993 aa).

Residues 2–102 (LESYVTPILM…KDGIQDDHES (101 aa)) form the Chorein N-terminal domain. The disordered stretch occupies residues 100–133 (HESCGSNSTNRSTAENTKSSIKPRRIQQAAPADP). Over residues 103-119 (CGSNSTNRSTAENTKSS) the composition is skewed to polar residues. Phosphoserine occurs at positions 413, 998, 1001, and 1032. Disordered regions lie at residues 1262 to 1303 (SPVW…PFSD), 1616 to 1637 (DQLK…ERNS), and 1735 to 1770 (TKAT…DSGI). Residues 1264-1291 (VWSSVGTAPPDTSTCSPSADIGTTTEGD) show a composition bias toward polar residues. Over residues 1739–1750 (EISKQEQKKVDT) the composition is skewed to basic and acidic residues. Residues 1756–1770 (AETSSRYSGAQDSGI) are compositionally biased toward polar residues. Ser-1789 carries the phosphoserine modification. Residues 2048 to 2067 (HSSAHSKETSTPSDSILNMD) form a disordered region. The SHR-BD domain maps to 2604 to 2683 (HFVICNDTQE…TIQYKGRTAS (80 aa)). The segment at 3880–3993 (AFPITEISCA…KNKALRKGFS (114 aa)) is localizes the protein to the Golgi apparatus.

Belongs to the VPS13 family. Interacts with STX6. Interacts with STX12 (via N-terminus). Interacts with RAB6A isoform 1 (GTP-bound) and isoform 2 (GTP-bound). Interacts with RAB6B (GTP-bound). Ubiquitously expressed in all examined tissues.

It localises to the recycling endosome membrane. It is found in the cytoplasmic vesicle. Its subcellular location is the secretory vesicle. The protein resides in the acrosome membrane. The protein localises to the golgi apparatus. It localises to the cis-Golgi network membrane. It is found in the endoplasmic reticulum-Golgi intermediate compartment membrane. Its subcellular location is the trans-Golgi network membrane. The protein resides in the early endosome membrane. The protein localises to the lysosome membrane. Its function is as follows. Mediates the transfer of lipids between membranes at organelle contact sites. Binds phosphatidylinositol 3-phosphate. Functions as a tethering factor in the slow endocytic recycling pathway, to assist traffic between early and recycling endosomes. Involved in the transport of proacrosomal vesicles to the nuclear dense lamina (NDL) during spermatid development. Plays a role in the assembly of the Golgi apparatus, possibly by mediating trafficking to the Golgi membrane. Plays a role in the development of the nervous system, and may be required for neuron projection development. May also play a role during adipose tissue development. Required for maintenance of the ocular lens. Required for proper organization of the Golgi. This Mus musculus (Mouse) protein is Intermembrane lipid transfer protein VPS13B.